A 631-amino-acid polypeptide reads, in one-letter code: Glutamine--fructose-6-phosphate aminotransferase [isomerizing] (631 aa).

Catalysis depends on Cys2, which acts as the Nucleophile; for GATase activity. The region spanning 2–225 (CGIVGYIGTQ…NGEIARLTPL (224 aa)) is the Glutamine amidotransferase type-2 domain. SIS domains follow at residues 298–446 (LDPQ…QRHS) and 480–621 (LAHE…VDQP). The active-site For Fru-6P isomerization activity is Lys626.

In terms of assembly, homodimer.

The protein resides in the cytoplasm. It catalyses the reaction D-fructose 6-phosphate + L-glutamine = D-glucosamine 6-phosphate + L-glutamate. Catalyzes the first step in hexosamine metabolism, converting fructose-6P into glucosamine-6P using glutamine as a nitrogen source. The chain is Glutamine--fructose-6-phosphate aminotransferase [isomerizing] from Synechocystis sp. (strain ATCC 27184 / PCC 6803 / Kazusa).